Here is a 126-residue protein sequence, read N- to C-terminus: Fluoride-specific ion channel FluC (126 aa).

4 helical membrane passes run 6-26, 36-56, 69-89, and 99-119; these read FVAV…FSVL, YGTL…VGFF, LAIT…SEVV, and WAAM…ALGL. Residues glycine 76 and threonine 79 each contribute to the Na(+) site.

Belongs to the fluoride channel Fluc/FEX (TC 1.A.43) family.

Its subcellular location is the cell inner membrane. It catalyses the reaction fluoride(in) = fluoride(out). Its activity is regulated as follows. Na(+) is not transported, but it plays an essential structural role and its presence is essential for fluoride channel function. Fluoride-specific ion channel. Important for reducing fluoride concentration in the cell, thus reducing its toxicity. In Cupriavidus taiwanensis (strain DSM 17343 / BCRC 17206 / CCUG 44338 / CIP 107171 / LMG 19424 / R1) (Ralstonia taiwanensis (strain LMG 19424)), this protein is Fluoride-specific ion channel FluC.